Consider the following 500-residue polypeptide: Cytochrome P450 monooxygenase acrD (500 aa).

The chain crosses the membrane as a helical span at residues 13–32; the sequence is PYLSGTNLVWTLLLVGYIIP. Asn210 and Asn414 each carry an N-linked (GlcNAc...) asparagine glycan. Cys447 contributes to the heme binding site.

It belongs to the cytochrome P450 family. The cofactor is heme.

It localises to the membrane. It participates in secondary metabolite biosynthesis. In terms of biological role, cytochrome P450 monooxygenase; part of the cluster that mediates the biosynthesis of acurin A, a highly reduced polyketide coupled to a serine via a peptide bond. The activities of the highly reducing polyketide synthase acrA and the nonribosomal peptide synthetase acrB are collectively responsible for the synthesis of the acurin A core structure with a heptaketide backbone produced by acrA covalently fused to a L-serine by acrB. After the formation of the PK-NRP hybrid product, it is detached from acrB by reductive release to set up the formation of the lactam ring by aldol condensation. The hydrolyase acrC then catalyzes water loss to generate a double bond in the ring. This double bond is probably reduced, which is followed by three oxidations at C-22 to generate the carboxylic acid moiety, involving probably the FAD-binding monooxygenase acrE and the cytochrome P450 monooxygenases acrD and acrF. Finally, a last methylation step performed by the O-methyltransferase acrG leads to the production of acurin A. This Aspergillus aculeatus (strain ATCC 16872 / CBS 172.66 / WB 5094) protein is Cytochrome P450 monooxygenase acrD.